A 73-amino-acid polypeptide reads, in one-letter code: uncharacterized protein (73 aa).

It belongs to the asfivirus DP63R family.

This is an uncharacterized protein from Ornithodoros (relapsing fever ticks).